The sequence spans 753 residues: Serine/threonine-protein phosphatase with EF-hands 2 (753 aa).

Residues 21 to 46 enclose the IQ domain; sequence KAAALIQRWYRRYVARLEMRRRCTWS. The tract at residues 128-540 is catalytic; the sequence is ATALVEAFRL…PHIVQYQANK (413 aa). Mn(2+)-binding residues include Asp179, His181, Asp208, and Asn240. His241 functions as the Proton donor in the catalytic mechanism. Residue His292 participates in Mn(2+) binding. Disordered stretches follow at residues 318-382 and 409-435; these read CKTR…GSLD and VTGE…KPTQ. The span at 322–333 shows a compositional bias: basic and acidic residues; the sequence is QKSEKQMEEKRR. Residues 348–361 show a composition bias toward low complexity; it reads LPESRSLPSSPLRL. Over residues 366–377 the composition is skewed to polar residues; sequence AQKTSRSSSIPC. His488 is a binding site for Mn(2+). 3 EF-hand domains span residues 568–603, 652–687, and 692–727; these read AHSS…VLHL, RNRS…FSSH, and ITDD…VEKS. Residues Asp665, Asp667, Ser669, Glu676, Asp705, Asn707, Asp709, His711, and Glu716 each contribute to the Ca(2+) site. Positions 732–753 are disordered; it reads DASECPQATNAKDSGCSSPGAH. The segment covering 737-753 has biased composition (polar residues); that stretch reads PQATNAKDSGCSSPGAH.

The protein belongs to the PPP phosphatase family. It depends on Mn(2+) as a cofactor. Retinal specific.

The protein resides in the cytoplasm. The protein localises to the cell projection. It localises to the cilium. It is found in the photoreceptor outer segment. Its subcellular location is the photoreceptor inner segment. The catalysed reaction is O-phospho-L-seryl-[protein] + H2O = L-seryl-[protein] + phosphate. The enzyme catalyses O-phospho-L-threonyl-[protein] + H2O = L-threonyl-[protein] + phosphate. With respect to regulation, activated by calcium. Functionally, may play a role in phototransduction. May dephosphorylate photoactivated rhodopsin. May function as a calcium sensing regulator of ionic currents, energy production or synaptic transmission. The polypeptide is Serine/threonine-protein phosphatase with EF-hands 2 (PPEF2) (Homo sapiens (Human)).